Reading from the N-terminus, the 407-residue chain is Tryptophan synthase beta chain (407 aa).

K98 is modified (N6-(pyridoxal phosphate)lysine).

This sequence belongs to the TrpB family. As to quaternary structure, tetramer of two alpha and two beta chains. Pyridoxal 5'-phosphate is required as a cofactor.

The catalysed reaction is (1S,2R)-1-C-(indol-3-yl)glycerol 3-phosphate + L-serine = D-glyceraldehyde 3-phosphate + L-tryptophan + H2O. It participates in amino-acid biosynthesis; L-tryptophan biosynthesis; L-tryptophan from chorismate: step 5/5. Functionally, the beta subunit is responsible for the synthesis of L-tryptophan from indole and L-serine. The chain is Tryptophan synthase beta chain from Bradyrhizobium sp. (strain BTAi1 / ATCC BAA-1182).